The primary structure comprises 483 residues: UDP-N-acetylmuramoyl-L-alanyl-D-glutamate--2,6-diaminopimelate ligase (483 aa).

A UDP-N-acetyl-alpha-D-muramoyl-L-alanyl-D-glutamate-binding site is contributed by serine 29. Residue 112 to 118 (GTNGKTT) coordinates ATP. UDP-N-acetyl-alpha-D-muramoyl-L-alanyl-D-glutamate contacts are provided by residues 154–155 (TT), serine 181, and arginine 189. Position 221 is an N6-carboxylysine (lysine 221). Meso-2,6-diaminopimelate contacts are provided by residues arginine 380, 404–407 (DNPR), glycine 454, and glutamate 458. Positions 404 to 407 (DNPR) match the Meso-diaminopimelate recognition motif motif.

This sequence belongs to the MurCDEF family. MurE subfamily. Requires Mg(2+) as cofactor. Carboxylation is probably crucial for Mg(2+) binding and, consequently, for the gamma-phosphate positioning of ATP.

The protein localises to the cytoplasm. It catalyses the reaction UDP-N-acetyl-alpha-D-muramoyl-L-alanyl-D-glutamate + meso-2,6-diaminopimelate + ATP = UDP-N-acetyl-alpha-D-muramoyl-L-alanyl-gamma-D-glutamyl-meso-2,6-diaminopimelate + ADP + phosphate + H(+). The protein operates within cell wall biogenesis; peptidoglycan biosynthesis. Its function is as follows. Catalyzes the addition of meso-diaminopimelic acid to the nucleotide precursor UDP-N-acetylmuramoyl-L-alanyl-D-glutamate (UMAG) in the biosynthesis of bacterial cell-wall peptidoglycan. This chain is UDP-N-acetylmuramoyl-L-alanyl-D-glutamate--2,6-diaminopimelate ligase, found in Clostridium botulinum (strain ATCC 19397 / Type A).